Reading from the N-terminus, the 294-residue chain is Homeobox-leucine zipper protein ATHB-13 (294 aa).

Residues 82-141 constitute a DNA-binding region (homeobox); sequence MGEKKRRLNMEQVKTLEKNFELGNKLEPERKMQLARALGLQPRQIAIWFQNRRARWKTKQ. The interval 142-177 is leucine-zipper; sequence LEKDYDTLKRQFDTLKAENDLLQTHNQKLQAEIMGL. A disordered region spans residues 181–246; the sequence is EQTESINLNK…FFPPSPATAT (66 aa). Residues 197–210 show a composition bias toward low complexity; that stretch reads SNRSDNSSDNLRLD. Residues 214-223 show a composition bias toward polar residues; sequence APPSNDSTLT.

It belongs to the HD-ZIP homeobox family. Class I subfamily. As to expression, predominantly expressed in leaves and flowers.

The protein localises to the nucleus. Functionally, probable transcription factor that may act in the sucrose-signaling pathway. The protein is Homeobox-leucine zipper protein ATHB-13 (ATHB-13) of Arabidopsis thaliana (Mouse-ear cress).